The chain runs to 218 residues: Thiopurine S-methyltransferase (218 aa).

S-adenosyl-L-methionine-binding residues include W11, L46, E67, and R122.

Belongs to the class I-like SAM-binding methyltransferase superfamily. TPMT family.

It is found in the cytoplasm. The enzyme catalyses S-adenosyl-L-methionine + a thiopurine = S-adenosyl-L-homocysteine + a thiopurine S-methylether.. The chain is Thiopurine S-methyltransferase from Vibrio cholerae serotype O1 (strain ATCC 39541 / Classical Ogawa 395 / O395).